A 227-amino-acid chain; its full sequence is Cytochrome c oxidase subunit 2 (227 aa).

The Mitochondrial intermembrane portion of the chain corresponds to 1–14 (MAYPMQLGFQDATS). A helical membrane pass occupies residues 15-45 (PIMEELLHFHDHTLMIVFLISSLVLYIISLM). The Mitochondrial matrix segment spans residues 46 to 59 (LTTKLTHTSTMDAQ). A helical membrane pass occupies residues 60–87 (EVETIWTILPAIILILIALPSLRILYMM). At 88–227 (DEINNPSLTV…YFEKWSASML (140 aa)) the chain is on the mitochondrial intermembrane side. Cu cation is bound by residues His161, Cys196, Glu198, Cys200, His204, and Met207. Position 198 (Glu198) interacts with Mg(2+). Residue Tyr218 is modified to Phosphotyrosine.

Belongs to the cytochrome c oxidase subunit 2 family. In terms of assembly, component of the cytochrome c oxidase (complex IV, CIV), a multisubunit enzyme composed of 14 subunits. The complex is composed of a catalytic core of 3 subunits MT-CO1, MT-CO2 and MT-CO3, encoded in the mitochondrial DNA, and 11 supernumerary subunits COX4I, COX5A, COX5B, COX6A, COX6B, COX6C, COX7A, COX7B, COX7C, COX8 and NDUFA4, which are encoded in the nuclear genome. The complex exists as a monomer or a dimer and forms supercomplexes (SCs) in the inner mitochondrial membrane with NADH-ubiquinone oxidoreductase (complex I, CI) and ubiquinol-cytochrome c oxidoreductase (cytochrome b-c1 complex, complex III, CIII), resulting in different assemblies (supercomplex SCI(1)III(2)IV(1) and megacomplex MCI(2)III(2)IV(2)). Found in a complex with TMEM177, COA6, COX18, COX20, SCO1 and SCO2. Interacts with TMEM177 in a COX20-dependent manner. Interacts with COX20. Interacts with COX16. Cu cation serves as cofactor.

Its subcellular location is the mitochondrion inner membrane. It catalyses the reaction 4 Fe(II)-[cytochrome c] + O2 + 8 H(+)(in) = 4 Fe(III)-[cytochrome c] + 2 H2O + 4 H(+)(out). Its function is as follows. Component of the cytochrome c oxidase, the last enzyme in the mitochondrial electron transport chain which drives oxidative phosphorylation. The respiratory chain contains 3 multisubunit complexes succinate dehydrogenase (complex II, CII), ubiquinol-cytochrome c oxidoreductase (cytochrome b-c1 complex, complex III, CIII) and cytochrome c oxidase (complex IV, CIV), that cooperate to transfer electrons derived from NADH and succinate to molecular oxygen, creating an electrochemical gradient over the inner membrane that drives transmembrane transport and the ATP synthase. Cytochrome c oxidase is the component of the respiratory chain that catalyzes the reduction of oxygen to water. Electrons originating from reduced cytochrome c in the intermembrane space (IMS) are transferred via the dinuclear copper A center (CU(A)) of subunit 2 and heme A of subunit 1 to the active site in subunit 1, a binuclear center (BNC) formed by heme A3 and copper B (CU(B)). The BNC reduces molecular oxygen to 2 water molecules using 4 electrons from cytochrome c in the IMS and 4 protons from the mitochondrial matrix. The sequence is that of Cytochrome c oxidase subunit 2 (MT-CO2) from Syncerus caffer (African buffalo).